A 212-amino-acid chain; its full sequence is 3,4-dihydroxy-2-butanone 4-phosphate synthase (212 aa).

D-ribulose 5-phosphate is bound by residues 37–38 (RE), Asp-42, 150–154 (RRGHT), and Glu-174. Glu-38 contributes to the Mg(2+) binding site. His-153 lines the Mg(2+) pocket.

The protein belongs to the DHBP synthase family. As to quaternary structure, homodimer. The cofactor is Mg(2+). Mn(2+) is required as a cofactor.

It carries out the reaction D-ribulose 5-phosphate = (2S)-2-hydroxy-3-oxobutyl phosphate + formate + H(+). It functions in the pathway cofactor biosynthesis; riboflavin biosynthesis; 2-hydroxy-3-oxobutyl phosphate from D-ribulose 5-phosphate: step 1/1. Catalyzes the conversion of D-ribulose 5-phosphate to formate and 3,4-dihydroxy-2-butanone 4-phosphate. The protein is 3,4-dihydroxy-2-butanone 4-phosphate synthase of Histophilus somni (strain 129Pt) (Haemophilus somnus).